The primary structure comprises 251 residues: Pyrroloquinoline-quinone synthase (251 aa).

This sequence belongs to the PqqC family.

It carries out the reaction 6-(2-amino-2-carboxyethyl)-7,8-dioxo-1,2,3,4,7,8-hexahydroquinoline-2,4-dicarboxylate + 3 O2 = pyrroloquinoline quinone + 2 H2O2 + 2 H2O + H(+). Its pathway is cofactor biosynthesis; pyrroloquinoline quinone biosynthesis. Ring cyclization and eight-electron oxidation of 3a-(2-amino-2-carboxyethyl)-4,5-dioxo-4,5,6,7,8,9-hexahydroquinoline-7,9-dicarboxylic-acid to PQQ. The polypeptide is Pyrroloquinoline-quinone synthase (Cronobacter sakazakii (strain ATCC BAA-894) (Enterobacter sakazakii)).